We begin with the raw amino-acid sequence, 94 residues long: Small ribosomal subunit protein uS19 (94 aa).

Belongs to the universal ribosomal protein uS19 family.

In terms of biological role, protein S19 forms a complex with S13 that binds strongly to the 16S ribosomal RNA. This Wolbachia sp. subsp. Brugia malayi (strain TRS) protein is Small ribosomal subunit protein uS19.